Reading from the N-terminus, the 203-residue chain is Sec-independent protein translocase protein TatB (203 aa).

A helical membrane pass occupies residues 1–21; sequence MFDIGWTELLVIAVVLIVVVG. Residues 179 to 203 are disordered; the sequence is KPKRTTAVRKPATLKKPAQTKKDEA.

It belongs to the TatB family. In terms of assembly, the Tat system comprises two distinct complexes: a TatABC complex, containing multiple copies of TatA, TatB and TatC subunits, and a separate TatA complex, containing only TatA subunits. Substrates initially bind to the TatABC complex, which probably triggers association of the separate TatA complex to form the active translocon.

It localises to the cell inner membrane. Functionally, part of the twin-arginine translocation (Tat) system that transports large folded proteins containing a characteristic twin-arginine motif in their signal peptide across membranes. Together with TatC, TatB is part of a receptor directly interacting with Tat signal peptides. TatB may form an oligomeric binding site that transiently accommodates folded Tat precursor proteins before their translocation. The sequence is that of Sec-independent protein translocase protein TatB from Rhizobium johnstonii (strain DSM 114642 / LMG 32736 / 3841) (Rhizobium leguminosarum bv. viciae).